The chain runs to 217 residues: Probable GTP-binding protein EngB (217 aa).

The 174-residue stretch at 44-217 (DRVEVCFAGR…TLRSIIAHLE (174 aa)) folds into the EngB-type G domain. GTP contacts are provided by residues 52–59 (GRSNVGKS), 79–83 (GRTQE), 97–100 (DLPG), 164–167 (TKAD), and 198–200 (TSS). Mg(2+) contacts are provided by S59 and T81.

The protein belongs to the TRAFAC class TrmE-Era-EngA-EngB-Septin-like GTPase superfamily. EngB GTPase family. Mg(2+) serves as cofactor.

In terms of biological role, necessary for normal cell division and for the maintenance of normal septation. This chain is Probable GTP-binding protein EngB, found in Ruegeria pomeroyi (strain ATCC 700808 / DSM 15171 / DSS-3) (Silicibacter pomeroyi).